The primary structure comprises 223 residues: 23 kDa piroplasm membrane protein (223 aa).

Positions 1 to 19 (MHKFTKVFFVAILVHTLKS) are cleaved as a signal peptide. The Extracellular portion of the chain corresponds to 20-197 (GLVFTPVSGT…EEEKSDKKKY (178 aa)). An N-linked (GlcNAc...) asparagine glycan is attached at Asn-69. The helical transmembrane segment at 198–218 (VLMVVVVVVFVVVASLVVFLV) threads the bilayer. At 219–223 (KFCLK) the chain is on the cytoplasmic side.

The protein resides in the membrane. The chain is 23 kDa piroplasm membrane protein from Theileria buffeli.